A 242-amino-acid polypeptide reads, in one-letter code: MHVLIVDDEPLAREELSYLVSQHPQVTSVAEADSVAEAMEEMMDQKPDLLFLDIHLTDESGFDLAEKLTHLKKAPYLVFATAYDQYALKAFQVNAKDYILKPFEEEKITQVIEKASKEMGQAVPENTAEKGPKSEAIPIQGEDRIYLVAPEDIYLVSVEERQLSIFVDQQVYKMTGTLNSIEQKLPATLFIKTHRSFILNRTKIQEIQPWFNNTLQVILTNGSKVPVSRSYVKEFKEKLGLS.

The Response regulatory domain occupies 2-116; that stretch reads HVLIVDDEPL…KITQVIEKAS (115 aa). The 105-residue stretch at 137–241 folds into the HTH LytTR-type domain; sequence IPIQGEDRIY…VKEFKEKLGL (105 aa).

Phosphorylated by LytS.

It is found in the cytoplasm. Its function is as follows. Member of the two-component regulatory system LytS/LytT that probably regulates genes involved in cell wall metabolism. The protein is Sensory transduction protein LytT (lytT) of Enterococcus faecalis (strain ATCC 700802 / V583).